The chain runs to 429 residues: Adenylosuccinate synthetase (429 aa).

Residues 12–18 (GDEGKGK) and 40–42 (GHT) contribute to the GTP site. Aspartate 13 acts as the Proton acceptor in catalysis. Mg(2+)-binding residues include aspartate 13 and glycine 40. IMP is bound by residues 13 to 16 (DEGK), 38 to 41 (NAGH), threonine 128, arginine 142, glutamine 223, threonine 238, and arginine 302. Histidine 41 acts as the Proton donor in catalysis. 298 to 304 (TTTGRPR) lines the substrate pocket. GTP is bound by residues arginine 304, 330-332 (CID), and 412-414 (SVG).

Belongs to the adenylosuccinate synthetase family. In terms of assembly, homodimer. Mg(2+) is required as a cofactor.

It is found in the cytoplasm. The catalysed reaction is IMP + L-aspartate + GTP = N(6)-(1,2-dicarboxyethyl)-AMP + GDP + phosphate + 2 H(+). The protein operates within purine metabolism; AMP biosynthesis via de novo pathway; AMP from IMP: step 1/2. Functionally, plays an important role in the de novo pathway of purine nucleotide biosynthesis. Catalyzes the first committed step in the biosynthesis of AMP from IMP. The sequence is that of Adenylosuccinate synthetase from Streptococcus mutans serotype c (strain ATCC 700610 / UA159).